Consider the following 412-residue polypeptide: Polyferredoxin protein MvhB (412 aa).

12 consecutive 4Fe-4S ferredoxin-type domains span residues 1-29, 30-57, 67-96, 97-127, 138-166, 168-197, 207-236, 238-266, 276-305, 314-345, 357-386, and 385-412; these read MIVV…VTPE, DVIY…IEDL, GRIV…LDEG, KVKK…VEGI, EGPI…LEKV, GVIE…ISGK, RKFE…PKSS, LTVE…LDVE, EGLV…VVTR, EKVD…LVDM, KRVQ…LTDE, and DEKV…LSLK. [4Fe-4S] cluster-binding residues include cysteine 9, cysteine 12, cysteine 15, and cysteine 19. Cysteine 76, cysteine 79, cysteine 82, cysteine 86, cysteine 107, cysteine 110, cysteine 113, cysteine 117, cysteine 146, cysteine 149, cysteine 152, cysteine 156, cysteine 177, cysteine 180, cysteine 183, cysteine 187, cysteine 216, cysteine 219, cysteine 222, cysteine 226, cysteine 246, cysteine 249, cysteine 252, and cysteine 256 together coordinate [4Fe-4S] cluster. [4Fe-4S] cluster-binding residues include cysteine 325, cysteine 328, cysteine 331, cysteine 335, cysteine 366, cysteine 369, cysteine 372, cysteine 376, cysteine 394, cysteine 397, cysteine 400, and cysteine 404.

[4Fe-4S] cluster is required as a cofactor.

This chain is Polyferredoxin protein MvhB (mvhB), found in Methanothermobacter marburgensis (strain ATCC BAA-927 / DSM 2133 / JCM 14651 / NBRC 100331 / OCM 82 / Marburg) (Methanobacterium thermoautotrophicum).